We begin with the raw amino-acid sequence, 460 residues long: GTPase Der (460 aa).

EngA-type G domains are found at residues 3-167 (FTIA…PEPT) and 189-364 (IRVA…AIWN). Residues 9–16 (GRPNVGKS), 56–60 (DTAGL), 119–122 (NKSE), 195–202 (GRPNAGKS), 242–246 (DTAGL), and 307–310 (NKWD) each bind GTP. Residues 365 to 449 (RRVPTAALNR…PIRITLREKA (85 aa)) form the KH-like domain.

This sequence belongs to the TRAFAC class TrmE-Era-EngA-EngB-Septin-like GTPase superfamily. EngA (Der) GTPase family. Associates with the 50S ribosomal subunit.

Functionally, GTPase that plays an essential role in the late steps of ribosome biogenesis. In Nitrobacter hamburgensis (strain DSM 10229 / NCIMB 13809 / X14), this protein is GTPase Der.